Here is a 253-residue protein sequence, read N- to C-terminus: 5'/3'-nucleotidase SurE (253 aa).

Residues D8, D9, S39, and N92 each coordinate a divalent metal cation.

Belongs to the SurE nucleotidase family. A divalent metal cation is required as a cofactor.

Its subcellular location is the cytoplasm. The catalysed reaction is a ribonucleoside 5'-phosphate + H2O = a ribonucleoside + phosphate. It carries out the reaction a ribonucleoside 3'-phosphate + H2O = a ribonucleoside + phosphate. The enzyme catalyses [phosphate](n) + H2O = [phosphate](n-1) + phosphate + H(+). Functionally, nucleotidase with a broad substrate specificity as it can dephosphorylate various ribo- and deoxyribonucleoside 5'-monophosphates and ribonucleoside 3'-monophosphates with highest affinity to 3'-AMP. Also hydrolyzes polyphosphate (exopolyphosphatase activity) with the preference for short-chain-length substrates (P20-25). Might be involved in the regulation of dNTP and NTP pools, and in the turnover of 3'-mononucleotides produced by numerous intracellular RNases (T1, T2, and F) during the degradation of various RNAs. The chain is 5'/3'-nucleotidase SurE from Erwinia tasmaniensis (strain DSM 17950 / CFBP 7177 / CIP 109463 / NCPPB 4357 / Et1/99).